A 187-amino-acid chain; its full sequence is Large ribosomal subunit protein uL13 (187 aa).

Belongs to the universal ribosomal protein uL13 family. As to quaternary structure, part of the 50S ribosomal subunit.

Its function is as follows. This protein is one of the early assembly proteins of the 50S ribosomal subunit, although it is not seen to bind rRNA by itself. It is important during the early stages of 50S assembly. The chain is Large ribosomal subunit protein uL13 from Pyrobaculum aerophilum (strain ATCC 51768 / DSM 7523 / JCM 9630 / CIP 104966 / NBRC 100827 / IM2).